The primary structure comprises 445 residues: E3 ubiquitin-protein ligase MYLIP (445 aa).

An FERM domain is found at 1 to 279 (MLCYVTRPDA…ETHAFYRCDT (279 aa)). Positions 360, 363, and 368 each coordinate Fe cation. The segment at 387–422 (CMVCCEEEINSTFCPCGHTVCCESCAAQLQSCPVCR) adopts an RING-type zinc-finger fold. Positions 431–433 (VYL) are critical for homodimerization.

In terms of assembly, homodimer. Interacts with the E2 ubiquitin-conjugating enzyme, UBE2D1 (via RING-type zinc finger). Interacts with myosin regulatory light chain (MRLC) and TMEM4. Autoubiquitinated. In terms of tissue distribution, ubiquitously expressed.

It is found in the cytoplasm. The protein resides in the cell membrane. It carries out the reaction S-ubiquitinyl-[E2 ubiquitin-conjugating enzyme]-L-cysteine + [acceptor protein]-L-lysine = [E2 ubiquitin-conjugating enzyme]-L-cysteine + N(6)-ubiquitinyl-[acceptor protein]-L-lysine.. It participates in protein modification; protein ubiquitination. Can bind 1 iron ion per dimer. Iron binding seems to decrease LDLR degradation activity. Its function is as follows. E3 ubiquitin-protein ligase that mediates ubiquitination and subsequent proteasomal degradation of myosin regulatory light chain (MRLC), LDLR, VLDLR and LRP8. Activity depends on E2 enzymes of the UBE2D family. Proteasomal degradation of MRLC leads to inhibit neurite outgrowth in presence of NGF by counteracting the stabilization of MRLC by saposin-like protein (CNPY2/MSAP) and reducing CNPY2-stimulated neurite outgrowth. Acts as a sterol-dependent inhibitor of cellular cholesterol uptake by mediating ubiquitination and subsequent degradation of LDLR. The chain is E3 ubiquitin-protein ligase MYLIP (MYLIP) from Homo sapiens (Human).